The following is a 351-amino-acid chain: DNA-directed RNA polymerase subunit alpha (351 aa).

The interval 1–236 (MSVNTKNWQE…DQLTLFVHFE (236 aa)) is alpha N-terminal domain (alpha-NTD). The segment at 256–351 (DDANQLNRYL…AKKLEQELLG (96 aa)) is alpha C-terminal domain (alpha-CTD).

This sequence belongs to the RNA polymerase alpha chain family. Homodimer. The RNAP catalytic core consists of 2 alpha, 1 beta, 1 beta' and 1 omega subunit. When a sigma factor is associated with the core the holoenzyme is formed, which can initiate transcription.

It catalyses the reaction RNA(n) + a ribonucleoside 5'-triphosphate = RNA(n+1) + diphosphate. In terms of biological role, DNA-dependent RNA polymerase catalyzes the transcription of DNA into RNA using the four ribonucleoside triphosphates as substrates. In Erythrobacter litoralis (strain HTCC2594), this protein is DNA-directed RNA polymerase subunit alpha.